The following is a 272-amino-acid chain: Zinc transporter ZupT (272 aa).

8 consecutive transmembrane segments (helical) span residues 11-31 (IALA…LMVV), 40-60 (LLAF…LTEI), 76-96 (LGFT…MVID), 126-146 (LMTA…TFFA), 158-178 (AFAI…PVYF), 189-209 (ASLL…LALF), 211-231 (VLSD…MVFL), and 250-270 (VYGL…FRFA). Fe(2+)-binding residues include asparagine 136 and glutamate 139. 2 residues coordinate Zn(2+): glutamate 139 and histidine 164. Fe(2+) contacts are provided by asparagine 165, glutamate 168, and glutamate 197. Residue glutamate 168 participates in Zn(2+) binding.

This sequence belongs to the ZIP transporter (TC 2.A.5) family. ZupT subfamily.

Its subcellular location is the cell inner membrane. It carries out the reaction Zn(2+)(in) = Zn(2+)(out). Its function is as follows. Mediates zinc uptake. May also transport other divalent cations. The chain is Zinc transporter ZupT from Xanthomonas axonopodis pv. citri (strain 306).